The chain runs to 316 residues: Tetrahydromethanopterin S-methyltransferase subunit H (316 aa).

The protein belongs to the MtrH family. In terms of assembly, the complex is composed of 8 subunits; MtrA, MtrB, MtrC, MtrD, MtrE, MtrF, MtrG and MtrH.

The enzyme catalyses 5-methyl-5,6,7,8-tetrahydromethanopterin + coenzyme M + 2 Na(+)(in) = 5,6,7,8-tetrahydromethanopterin + methyl-coenzyme M + 2 Na(+)(out). It participates in one-carbon metabolism; methanogenesis from CO(2); methyl-coenzyme M from 5,10-methylene-5,6,7,8-tetrahydromethanopterin: step 2/2. Its function is as follows. Part of a complex that catalyzes the formation of methyl-coenzyme M and tetrahydromethanopterin from coenzyme M and methyl-tetrahydromethanopterin. This is an energy-conserving, sodium-ion translocating step. MtrH catalyzes the transfer of the methyl group from methyl-tetrahydromethanopterin to the corrinoid prosthetic group of MtrA. The sequence is that of Tetrahydromethanopterin S-methyltransferase subunit H from Methanosarcina barkeri (strain Fusaro / DSM 804).